Consider the following 427-residue polypeptide: Serine/arginine (SR)-type shuttling mRNA binding protein GBP2 (427 aa).

The disordered stretch occupies residues 1–101 (MERELGMYGN…GRGGGRGRTL (101 aa)). Residues 22 to 32 (RLSDDRDRYDD) show a composition bias toward basic and acidic residues. S24 bears the Phosphoserine mark. Low complexity predominate over residues 35 to 44 (DSSSNNGNGS). Residues 50–60 (DRGSRFNDRYD) show a composition bias toward basic and acidic residues. RRM domains lie at 122-198 (NSIF…QDNP) and 219-296 (FEVF…EGRF). Position 130 is a phosphothreonine (T130). The span at 300–317 (KNNDRYNQRREDLEDTRG) shows a compositional bias: basic and acidic residues. Residues 300–319 (KNNDRYNQRREDLEDTRGTE) are disordered. The RRM 3 domain occupies 349 to 426 (CFIYCSNLPF…CSLQISYARR (78 aa)).

Post-translationally, methylated by HMT1.

The protein resides in the cytoplasm. It is found in the nucleus. It localises to the chromosome. Its subcellular location is the telomere. The protein localises to the P-body. The protein resides in the stress granule. Functionally, binds to intron-containing transcripts and is involved in quality control for the export of spliced mRNAs from the nucleus. Binds to pre-mRNAs until splicing is completed or until faulty mRNAs are degraded. On correctly spliced mRNAs, GBP2 and HRB1 recruit MEX67 to allow nuclear export. On faulty mRNAs, GBP2 and HRB1 associate with the TRAMP complex that guides those pre-mRNAs to the exosome for degradation. Binds single-stranded telomeric sequences of the type (TG[1-3])n in vitro. Influences the localization of RAP1 in the nuclei. Involved in modulating telomere length. The sequence is that of Serine/arginine (SR)-type shuttling mRNA binding protein GBP2 from Saccharomyces cerevisiae (strain ATCC 204508 / S288c) (Baker's yeast).